Consider the following 156-residue polypeptide: Small ribosomal subunit protein uS7 (156 aa).

This sequence belongs to the universal ribosomal protein uS7 family. In terms of assembly, part of the 30S ribosomal subunit. Contacts proteins S9 and S11.

In terms of biological role, one of the primary rRNA binding proteins, it binds directly to 16S rRNA where it nucleates assembly of the head domain of the 30S subunit. Is located at the subunit interface close to the decoding center, probably blocks exit of the E-site tRNA. The polypeptide is Small ribosomal subunit protein uS7 (Exiguobacterium sibiricum (strain DSM 17290 / CCUG 55495 / CIP 109462 / JCM 13490 / 255-15)).